Reading from the N-terminus, the 484-residue chain is Glutamate--tRNA ligase (484 aa).

Positions proline 11–asparagine 21 match the 'HIGH' region motif. The 'KMSKS' region motif lies at lysine 252–arginine 256. Lysine 255 provides a ligand contact to ATP.

It belongs to the class-I aminoacyl-tRNA synthetase family. Glutamate--tRNA ligase type 1 subfamily. Monomer.

The protein resides in the cytoplasm. It carries out the reaction tRNA(Glu) + L-glutamate + ATP = L-glutamyl-tRNA(Glu) + AMP + diphosphate. Its function is as follows. Catalyzes the attachment of glutamate to tRNA(Glu) in a two-step reaction: glutamate is first activated by ATP to form Glu-AMP and then transferred to the acceptor end of tRNA(Glu). This Staphylococcus aureus (strain MRSA252) protein is Glutamate--tRNA ligase.